Reading from the N-terminus, the 529-residue chain is MFKDQLAKEVNSRRTFAIISHPDAGKTTMTEKLLLWGKAIQVAGMVKSRKSDRSATSDWMEMEKERGISITTSVMQFPYKQHTINLLDTPGHEDFSEDTYRTLTAVDSALMVIDGAKGVEERTIKLMEVCRMRDTPIISFVNKMDREIREPLELLDEIENVLNIRCVPITWPLGMGRDFAGVYNLLENKLYLYKAGFGSTITDIEVRDGYDHADVREKVGELAWASFEESLELVQMANEPLDRELFLQGKQTPVLFGTALGNFAVDHVLDAFINWAPEPKAHPAQERNVDATEEGFSGFVFKIQANMDPKHRDRIAFMRICSGKYEKGLKMNHVRIGKDVRISDALTFLAGEREHLEEAWPGDIIGLHNHGTIQIGDTFTSGEKLHFTGIPHFAPEMFRRVRLRDPLKSKQLQKGLKELSEEGATQVFMPQISNDLIVGAVGVLQFDVVAYRLKEEYKVDCIYEPISVNTVRWVHCDDEKIFNEFKKKAHDQLSVDGGGHLTYLAPSRVNLQLMQERWPDIQFRNTREH.

The region spanning 11-280 (NSRRTFAIIS…AFINWAPEPK (270 aa)) is the tr-type G domain. GTP contacts are provided by residues 20–27 (SHPDAGKT), 88–92 (DTPGH), and 142–145 (NKMD).

Belongs to the TRAFAC class translation factor GTPase superfamily. Classic translation factor GTPase family. PrfC subfamily.

Its subcellular location is the cytoplasm. Functionally, increases the formation of ribosomal termination complexes and stimulates activities of RF-1 and RF-2. It binds guanine nucleotides and has strong preference for UGA stop codons. It may interact directly with the ribosome. The stimulation of RF-1 and RF-2 is significantly reduced by GTP and GDP, but not by GMP. This chain is Peptide chain release factor 3, found in Acinetobacter baylyi (strain ATCC 33305 / BD413 / ADP1).